The primary structure comprises 97 residues: Alpha-latrotoxin associated low molecular weight protein 2 (97 aa).

The signal sequence occupies residues 1 to 19; sequence MFKLICIVFIATILSITSA. Cystine bridges form between Cys36–Cys72, Cys52–Cys68, and Cys55–Cys81.

This sequence belongs to the arthropod CHH/MIH/GIH/VIH hormone family. Expressed by the venom gland.

Its subcellular location is the secreted. Its function is as follows. May increase the toxicity of alpha-latrotoxin and/or other venom components. Is non-toxic to mice and to the cockroach Periplaneta americana. This is Alpha-latrotoxin associated low molecular weight protein 2 from Steatoda grossa (False black widow).